The sequence spans 84 residues: Cell division topological specificity factor (84 aa).

This sequence belongs to the MinE family.

In terms of biological role, prevents the cell division inhibition by proteins MinC and MinD at internal division sites while permitting inhibition at polar sites. This ensures cell division at the proper site by restricting the formation of a division septum at the midpoint of the long axis of the cell. This chain is Cell division topological specificity factor, found in Burkholderia cenocepacia (strain ATCC BAA-245 / DSM 16553 / LMG 16656 / NCTC 13227 / J2315 / CF5610) (Burkholderia cepacia (strain J2315)).